A 691-amino-acid polypeptide reads, in one-letter code: Mediator of RNA polymerase II transcription subunit 17 (691 aa).

The stretch at 158–185 (KLESFDAAANKLLQSAQRLEEDIAAETK) forms a coiled coil.

It belongs to the Mediator complex subunit 17 family. As to quaternary structure, component of the Mediator complex.

The protein localises to the nucleus. Functionally, component of the Mediator complex, a coactivator involved in the regulated transcription of nearly all RNA polymerase II-dependent genes. Mediator functions as a bridge to convey information from gene-specific regulatory proteins to the basal RNA polymerase II transcription machinery. Mediator is recruited to promoters by direct interactions with regulatory proteins and serves as a scaffold for the assembly of a functional preinitiation complex with RNA polymerase II and the general transcription factors. The polypeptide is Mediator of RNA polymerase II transcription subunit 17 (SRB4) (Coccidioides immitis (strain RS) (Valley fever fungus)).